Consider the following 1960-residue polypeptide: Intraflagellar transport protein 172 (1960 aa).

2 WD repeats span residues S63–K103 and G328–C367. TPR repeat units lie at residues K1064–R1098, C1362–V1395, and M1397–R1428.

Belongs to the IFT172 family.

The protein localises to the cell projection. Its subcellular location is the cilium. It localises to the flagellum. The protein resides in the cytoplasm. It is found in the cytoskeleton. The protein localises to the flagellum axoneme. Its subcellular location is the flagellum basal body. Its function is as follows. Component of the intraflagellar transport complex B (IFT-B) involved in flagellar assembly. The sequence is that of Intraflagellar transport protein 172 from Giardia intestinalis (strain ATCC 50803 / WB clone C6) (Giardia lamblia).